The primary structure comprises 132 residues: CDGSH iron-sulfur domain-containing protein 2 homolog (132 aa).

The Lumenal portion of the chain corresponds to 1 to 35 (MEPISHVVKSSLPNYLSSLPIPDSFGGWFKLSFKD). A helical transmembrane segment spans residues 36-58 (WLALIPPTVVVAGLGYTTYLAFC). At 59 to 132 (PAARCAGKDS…NVGPVVVKKK (74 aa)) the chain is on the cytoplasmic side. [2Fe-2S] cluster-binding residues include Cys-98, Cys-100, Cys-109, and His-113.

It belongs to the CISD protein family. CISD2 subfamily. [2Fe-2S] cluster is required as a cofactor.

The protein localises to the endoplasmic reticulum membrane. This is CDGSH iron-sulfur domain-containing protein 2 homolog from Drosophila persimilis (Fruit fly).